We begin with the raw amino-acid sequence, 307 residues long: Nucleotide-binding protein ACP_0619 (307 aa).

The span at 1–14 (MPAPEPTRRAKKDA) shows a compositional bias: basic and acidic residues. The interval 1-23 (MPAPEPTRRAKKDASASPSPAHP) is disordered. Residue 33–40 (GLSGAGKG) participates in ATP binding. A GTP-binding site is contributed by 83-86 (DVRE).

It belongs to the RapZ-like family.

Functionally, displays ATPase and GTPase activities. In Acidobacterium capsulatum (strain ATCC 51196 / DSM 11244 / BCRC 80197 / JCM 7670 / NBRC 15755 / NCIMB 13165 / 161), this protein is Nucleotide-binding protein ACP_0619.